A 92-amino-acid polypeptide reads, in one-letter code: Protein RnfH (92 aa).

Belongs to the UPF0125 (RnfH) family.

The polypeptide is Protein RnfH (Neisseria gonorrhoeae (strain NCCP11945)).